The chain runs to 364 residues: Protein PTOV1 homolog (364 aa).

The disordered stretch occupies residues 187-207; the sequence is AKRKPGVKTPKQPQPEEPPPV.

Belongs to the Mediator complex subunit 25 family. PTOV1 subfamily.

In Drosophila melanogaster (Fruit fly), this protein is Protein PTOV1 homolog.